The primary structure comprises 32 residues: Potassium channel toxin alpha-KTx 10.2 (32 aa).

Intrachain disulfides connect Cys3-Cys22, Cys8-Cys12, and Cys27-Cys29. Tyr32 is subject to Tyrosine amide.

The protein belongs to the short scorpion toxin superfamily. Potassium channel inhibitor family. Alpha-KTx 10 subfamily. As to expression, expressed by the venom gland.

The protein localises to the secreted. Functionally, blocks Shaker B potassium-channels (Kv1.1/KCNA1 sub-family). In Centruroides noxius (Mexican scorpion), this protein is Potassium channel toxin alpha-KTx 10.2.